The chain runs to 175 residues: Interferon gamma (175 aa).

Positions 1–23 are cleaved as a signal peptide; sequence MNATCCILALLLCLTQAISGCYC. The residue at position 24 (Gln24) is a Pyrrolidone carboxylic acid. 2 N-linked (GlcNAc...) asparagine glycosylation sites follow: Asn39 and Asn106.

Belongs to the type II (or gamma) interferon family. As to quaternary structure, homodimer. Interacts with IFNGR1 (via extracellular domain); this interaction promotes IFNGR1 dimerization. As to expression, released primarily from activated T lymphocytes.

It is found in the secreted. Functionally, type II interferon produced by immune cells such as T-cells and NK cells that plays crucial roles in antimicrobial, antiviral, and antitumor responses by activating effector immune cells and enhancing antigen presentation. Primarily signals through the JAK-STAT pathway after interaction with its receptor IFNGR1 to affect gene regulation. Upon IFNG binding, IFNGR1 intracellular domain opens out to allow association of downstream signaling components JAK2, JAK1 and STAT1, leading to STAT1 activation, nuclear translocation and transcription of IFNG-regulated genes. Many of the induced genes are transcription factors such as IRF1 that are able to further drive regulation of a next wave of transcription. Plays a role in class I antigen presentation pathway by inducing a replacement of catalytic proteasome subunits with immunoproteasome subunits. In turn, increases the quantity, quality, and repertoire of peptides for class I MHC loading. Increases the efficiency of peptide generation also by inducing the expression of activator PA28 that associates with the proteasome and alters its proteolytic cleavage preference. Up-regulates as well MHC II complexes on the cell surface by promoting expression of several key molecules such as cathepsins B/CTSB, H/CTSH, and L/CTSL. Participates in the regulation of hematopoietic stem cells during development and under homeostatic conditions by affecting their development, quiescence, and differentiation. The polypeptide is Interferon gamma (IFNG) (Peromyscus maniculatus (North American deer mouse)).